A 307-amino-acid polypeptide reads, in one-letter code: Taste receptor type 2 member 10 (307 aa).

The Extracellular portion of the chain corresponds to 1–6; it reads MLRVVE. Residues 7–27 form a helical membrane-spanning segment; sequence GIFIFVVISEXVFGVLGNGFI. The Cytoplasmic portion of the chain corresponds to 28–42; sequence GLVNCIDCAKNKLST. Residues 43 to 63 traverse the membrane as a helical segment; that stretch reads IGFILTGLAISRIFLIWIIIT. Topologically, residues 64-100 are extracellular; that stretch reads DGFIQIFSPDIYASGNLIEYISYFWVIGNQSSMWFAT. N-linked (GlcNAc...) asparagine glycosylation occurs at Asn92. The helical transmembrane segment at 101–121 threads the bilayer; that stretch reads SLSIFYFLKIANFSNYIFLWL. Residues 122–126 are Cytoplasmic-facing; the sequence is KSRTN. The helical transmembrane segment at 127–147 threads the bilayer; that stretch reads MVLPFMIVFLLISSLLNFAHI. Residues 148-179 lie on the Extracellular side of the membrane; that stretch reads AKILNDYKMKNDTVWDLNMYKSEYFIKQILLN. N-linked (GlcNAc...) asparagine glycosylation occurs at Asn158. The chain crosses the membrane as a helical span at residues 180–200; it reads LGVIFFFTLSLITCVFLIISL. At 201-227 the chain is on the cytoplasmic side; the sequence is WRHNRQMQSNVTGLRDSNTEAHVKAMK. Residues 228 to 248 form a helical membrane-spanning segment; that stretch reads VLISFXILFILYFIGMAIEIS. The Extracellular segment spans residues 249–257; that stretch reads CFTVRENKL. The chain crosses the membrane as a helical span at residues 258–278; sequence LLMFGMTTTAIYPWGHSFILI. The Cytoplasmic portion of the chain corresponds to 279 to 307; sequence LGNSKLKQASLRVLQQLKCCEKRKNLRVT.

This sequence belongs to the G-protein coupled receptor T2R family.

It localises to the membrane. In terms of biological role, receptor that may play a role in the perception of bitterness and is gustducin-linked. May play a role in sensing the chemical composition of the gastrointestinal content. The activity of this receptor may stimulate alpha gustducin, mediate PLC-beta-2 activation and lead to the gating of TRPM5. In Gorilla gorilla gorilla (Western lowland gorilla), this protein is Taste receptor type 2 member 10 (TAS2R10).